Here is a 339-residue protein sequence, read N- to C-terminus: Ribosomal RNA small subunit methyltransferase C (339 aa).

This sequence belongs to the methyltransferase superfamily. RsmC family. As to quaternary structure, monomer.

The protein localises to the cytoplasm. It carries out the reaction guanosine(1207) in 16S rRNA + S-adenosyl-L-methionine = N(2)-methylguanosine(1207) in 16S rRNA + S-adenosyl-L-homocysteine + H(+). Functionally, specifically methylates the guanine in position 1207 of 16S rRNA in the 30S particle. The protein is Ribosomal RNA small subunit methyltransferase C of Aliivibrio salmonicida (strain LFI1238) (Vibrio salmonicida (strain LFI1238)).